Consider the following 144-residue polypeptide: Cytochrome c-type biogenesis protein CcmE (144 aa).

The Cytoplasmic portion of the chain corresponds to 1–7 (MTRKQKR). The helical; Signal-anchor for type II membrane protein transmembrane segment at 8–28 (LAVIGSGMGFLALAAALTFYA) threads the bilayer. The Periplasmic portion of the chain corresponds to 29-144 (LGQQTSYFYM…LKKDGLWQEQ (116 aa)). The heme site is built by histidine 122 and tyrosine 126.

This sequence belongs to the CcmE/CycJ family.

Its subcellular location is the cell inner membrane. Heme chaperone required for the biogenesis of c-type cytochromes. Transiently binds heme delivered by CcmC and transfers the heme to apo-cytochromes in a process facilitated by CcmF and CcmH. The chain is Cytochrome c-type biogenesis protein CcmE from Chelativorans sp. (strain BNC1).